Consider the following 80-residue polypeptide: Small ribosomal subunit protein uS17c (80 aa).

This sequence belongs to the universal ribosomal protein uS17 family. As to quaternary structure, part of the 30S ribosomal subunit.

The protein resides in the plastid. Its subcellular location is the chloroplast. Functionally, one of the primary rRNA binding proteins, it binds specifically to the 5'-end of 16S ribosomal RNA. In Gracilaria tenuistipitata var. liui (Red alga), this protein is Small ribosomal subunit protein uS17c (rps17).